Here is a 415-residue protein sequence, read N- to C-terminus: tRNA(Ile)-lysidine synthase (415 aa).

Ser-36 to Ser-41 serves as a coordination point for ATP.

It belongs to the tRNA(Ile)-lysidine synthase family.

The protein resides in the cytoplasm. The catalysed reaction is cytidine(34) in tRNA(Ile2) + L-lysine + ATP = lysidine(34) in tRNA(Ile2) + AMP + diphosphate + H(+). Functionally, ligates lysine onto the cytidine present at position 34 of the AUA codon-specific tRNA(Ile) that contains the anticodon CAU, in an ATP-dependent manner. Cytidine is converted to lysidine, thus changing the amino acid specificity of the tRNA from methionine to isoleucine. The protein is tRNA(Ile)-lysidine synthase of Tropheryma whipplei (strain Twist) (Whipple's bacillus).